The chain runs to 34 residues: Photosystem I reaction center subunit XII (34 aa).

The helical transmembrane segment at 4–24 threads the bilayer; it reads VLSAPEVFIALVVAAHAAVLA.

This sequence belongs to the PsaM family.

The protein resides in the cellular thylakoid membrane. In Synechococcus sp. (strain CC9605), this protein is Photosystem I reaction center subunit XII.